The following is a 182-amino-acid chain: ATP synthase subunit delta (182 aa).

This sequence belongs to the ATPase delta chain family. F-type ATPases have 2 components, F(1) - the catalytic core - and F(0) - the membrane proton channel. F(1) has five subunits: alpha(3), beta(3), gamma(1), delta(1), epsilon(1). F(0) has three main subunits: a(1), b(2) and c(10-14). The alpha and beta chains form an alternating ring which encloses part of the gamma chain. F(1) is attached to F(0) by a central stalk formed by the gamma and epsilon chains, while a peripheral stalk is formed by the delta and b chains.

The protein resides in the cell inner membrane. In terms of biological role, f(1)F(0) ATP synthase produces ATP from ADP in the presence of a proton or sodium gradient. F-type ATPases consist of two structural domains, F(1) containing the extramembraneous catalytic core and F(0) containing the membrane proton channel, linked together by a central stalk and a peripheral stalk. During catalysis, ATP synthesis in the catalytic domain of F(1) is coupled via a rotary mechanism of the central stalk subunits to proton translocation. Its function is as follows. This protein is part of the stalk that links CF(0) to CF(1). It either transmits conformational changes from CF(0) to CF(1) or is implicated in proton conduction. This chain is ATP synthase subunit delta, found in Sulfurihydrogenibium azorense (strain DSM 15241 / OCM 825 / Az-Fu1).